Here is a 173-residue protein sequence, read N- to C-terminus: NAD(P)H-quinone oxidoreductase subunit J (173 aa).

Belongs to the complex I 30 kDa subunit family. NDH-1 can be composed of about 15 different subunits; different subcomplexes with different compositions have been identified which probably have different functions.

The protein resides in the cellular thylakoid membrane. It catalyses the reaction a plastoquinone + NADH + (n+1) H(+)(in) = a plastoquinol + NAD(+) + n H(+)(out). It carries out the reaction a plastoquinone + NADPH + (n+1) H(+)(in) = a plastoquinol + NADP(+) + n H(+)(out). In terms of biological role, NDH-1 shuttles electrons from an unknown electron donor, via FMN and iron-sulfur (Fe-S) centers, to quinones in the respiratory and/or the photosynthetic chain. The immediate electron acceptor for the enzyme in this species is believed to be plastoquinone. Couples the redox reaction to proton translocation, and thus conserves the redox energy in a proton gradient. Cyanobacterial NDH-1 also plays a role in inorganic carbon-concentration. In Prochlorococcus marinus (strain NATL1A), this protein is NAD(P)H-quinone oxidoreductase subunit J.